The following is a 347-amino-acid chain: NADH-ubiquinone oxidoreductase chain 2 (347 aa).

The next 10 membrane-spanning stretches (helical) occupy residues 1–21 (MNPLIFSIITFTMMLGTGIVM), 25–45 (HWLTMWIGFEMNMLAIIPILM), 59–79 (YFLTQATASMLLMLAVTINLV), 96–116 (IILTLAMAMKLGLSPFHFWVP), 122–142 (VHLPSGLILLTWQKLAPMSVL), 148–168 (MINLDLMFTMSILSIAIGGWG), 200–220 (MALLNLTIYIILTTTTFLTFM), 240–260 (ITTIILVTMLSLGGLPPLSGF), 274–294 (NSIIAPTTMAITALLNLFFYM), and 325–345 (LLSPLTILSTMILPLSPMLML).

Belongs to the complex I subunit 2 family. As to quaternary structure, core subunit of respiratory chain NADH dehydrogenase (Complex I) which is composed of 45 different subunits. Interacts with TMEM242.

Its subcellular location is the mitochondrion inner membrane. The catalysed reaction is a ubiquinone + NADH + 5 H(+)(in) = a ubiquinol + NAD(+) + 4 H(+)(out). Core subunit of the mitochondrial membrane respiratory chain NADH dehydrogenase (Complex I) which catalyzes electron transfer from NADH through the respiratory chain, using ubiquinone as an electron acceptor. Essential for the catalytic activity and assembly of complex I. This chain is NADH-ubiquinone oxidoreductase chain 2, found in Thoopterus nigrescens (Swift fruit bat).